The primary structure comprises 176 residues: Peptide methionine sulfoxide reductase MsrA (176 aa).

Cysteine 10 is an active-site residue.

This sequence belongs to the MsrA Met sulfoxide reductase family.

The enzyme catalyses L-methionyl-[protein] + [thioredoxin]-disulfide + H2O = L-methionyl-(S)-S-oxide-[protein] + [thioredoxin]-dithiol. It carries out the reaction [thioredoxin]-disulfide + L-methionine + H2O = L-methionine (S)-S-oxide + [thioredoxin]-dithiol. Has an important function as a repair enzyme for proteins that have been inactivated by oxidation. Catalyzes the reversible oxidation-reduction of methionine sulfoxide in proteins to methionine. The chain is Peptide methionine sulfoxide reductase MsrA from Leptospira borgpetersenii serovar Hardjo-bovis (strain JB197).